The primary structure comprises 430 residues: Signal recognition particle receptor FtsY (430 aa).

The interval Asp75–His95 is disordered. GTP contacts are provided by residues Gly238 to Thr245, Asp320 to Arg324, and Thr382 to Asp385.

It belongs to the GTP-binding SRP family. FtsY subfamily. In terms of assembly, part of the signal recognition particle protein translocation system, which is composed of SRP and FtsY.

It localises to the cell membrane. The protein localises to the cytoplasm. The enzyme catalyses GTP + H2O = GDP + phosphate + H(+). Involved in targeting and insertion of nascent membrane proteins into the cytoplasmic membrane. Acts as a receptor for the complex formed by the signal recognition particle (SRP) and the ribosome-nascent chain (RNC). In Mycobacterium leprae (strain TN), this protein is Signal recognition particle receptor FtsY.